The chain runs to 269 residues: Formamidopyrimidine-DNA glycosylase (269 aa).

Residue P2 is the Schiff-base intermediate with DNA of the active site. E3 acts as the Proton donor in catalysis. K57 functions as the Proton donor; for beta-elimination activity in the catalytic mechanism. DNA contacts are provided by H90, R109, and K150. An FPG-type zinc finger spans residues 235 to 269 (QVYGRKGEPCRVCGTPIVATKHAQRATFYCRQCQK). R259 serves as the catalytic Proton donor; for delta-elimination activity.

It belongs to the FPG family. As to quaternary structure, monomer. It depends on Zn(2+) as a cofactor.

The catalysed reaction is Hydrolysis of DNA containing ring-opened 7-methylguanine residues, releasing 2,6-diamino-4-hydroxy-5-(N-methyl)formamidopyrimidine.. The enzyme catalyses 2'-deoxyribonucleotide-(2'-deoxyribose 5'-phosphate)-2'-deoxyribonucleotide-DNA = a 3'-end 2'-deoxyribonucleotide-(2,3-dehydro-2,3-deoxyribose 5'-phosphate)-DNA + a 5'-end 5'-phospho-2'-deoxyribonucleoside-DNA + H(+). Functionally, involved in base excision repair of DNA damaged by oxidation or by mutagenic agents. Acts as a DNA glycosylase that recognizes and removes damaged bases. Has a preference for oxidized purines, such as 7,8-dihydro-8-oxoguanine (8-oxoG). Has AP (apurinic/apyrimidinic) lyase activity and introduces nicks in the DNA strand. Cleaves the DNA backbone by beta-delta elimination to generate a single-strand break at the site of the removed base with both 3'- and 5'-phosphates. This is Formamidopyrimidine-DNA glycosylase from Escherichia coli O6:H1 (strain CFT073 / ATCC 700928 / UPEC).